A 124-amino-acid polypeptide reads, in one-letter code: S-adenosylmethionine decarboxylase proenzyme (124 aa).

Ser-63 (schiff-base intermediate with substrate; via pyruvic acid) is an active-site residue. The residue at position 63 (Ser-63) is a Pyruvic acid (Ser); by autocatalysis. His-68 functions as the Proton acceptor; for processing activity in the catalytic mechanism. Catalysis depends on Cys-83, which acts as the Proton donor; for catalytic activity.

Belongs to the prokaryotic AdoMetDC family. Type 1 subfamily. Heterotetramer of two alpha and two beta chains arranged as a dimer of alpha/beta heterodimers. Requires pyruvate as cofactor. In terms of processing, is synthesized initially as an inactive proenzyme. Formation of the active enzyme involves a self-maturation process in which the active site pyruvoyl group is generated from an internal serine residue via an autocatalytic post-translational modification. Two non-identical subunits are generated from the proenzyme in this reaction, and the pyruvate is formed at the N-terminus of the alpha chain, which is derived from the carboxyl end of the proenzyme. The post-translation cleavage follows an unusual pathway, termed non-hydrolytic serinolysis, in which the side chain hydroxyl group of the serine supplies its oxygen atom to form the C-terminus of the beta chain, while the remainder of the serine residue undergoes an oxidative deamination to produce ammonia and the pyruvoyl group blocking the N-terminus of the alpha chain.

It carries out the reaction S-adenosyl-L-methionine + H(+) = S-adenosyl 3-(methylsulfanyl)propylamine + CO2. Its pathway is amine and polyamine biosynthesis; S-adenosylmethioninamine biosynthesis; S-adenosylmethioninamine from S-adenosyl-L-methionine: step 1/1. Catalyzes the decarboxylation of S-adenosylmethionine to S-adenosylmethioninamine (dcAdoMet), the propylamine donor required for the synthesis of the polyamines spermine and spermidine from the diamine putrescine. The protein is S-adenosylmethionine decarboxylase proenzyme of Geobacillus sp. (strain WCH70).